The primary structure comprises 204 residues: Probable molybdenum cofactor guanylyltransferase (204 aa).

GTP contacts are provided by residues 10–12, Lys-22, Asp-75, and Asp-104; that span reads LSG. Asp-104 serves as a coordination point for Mg(2+).

Belongs to the MobA family. Mg(2+) is required as a cofactor.

It is found in the cytoplasm. It carries out the reaction Mo-molybdopterin + GTP + H(+) = Mo-molybdopterin guanine dinucleotide + diphosphate. Functionally, transfers a GMP moiety from GTP to Mo-molybdopterin (Mo-MPT) cofactor (Moco or molybdenum cofactor) to form Mo-molybdopterin guanine dinucleotide (Mo-MGD) cofactor. In Methanocaldococcus jannaschii (strain ATCC 43067 / DSM 2661 / JAL-1 / JCM 10045 / NBRC 100440) (Methanococcus jannaschii), this protein is Probable molybdenum cofactor guanylyltransferase.